Reading from the N-terminus, the 142-residue chain is Large ribosomal subunit protein uL13 (142 aa).

The protein belongs to the universal ribosomal protein uL13 family. Part of the 50S ribosomal subunit.

Its function is as follows. This protein is one of the early assembly proteins of the 50S ribosomal subunit, although it is not seen to bind rRNA by itself. It is important during the early stages of 50S assembly. The polypeptide is Large ribosomal subunit protein uL13 (Pectobacterium atrosepticum (strain SCRI 1043 / ATCC BAA-672) (Erwinia carotovora subsp. atroseptica)).